The sequence spans 442 residues: uncharacterized protein (442 aa).

Residues methionine 1 to alanine 23 form the signal peptide. Disordered stretches follow at residues threonine 36–aspartate 67 and alanine 91–arginine 115. A compositionally biased stretch (low complexity) spans threonine 48 to aspartate 67. Residues asparagine 64, asparagine 92, asparagine 99, asparagine 130, asparagine 174, asparagine 225, asparagine 244, asparagine 346, asparagine 363, asparagine 386, and asparagine 398 are each glycosylated (N-linked (GlcNAc...) asparagine).

The protein resides in the secreted. This is an uncharacterized protein from Arthroderma benhamiae (strain ATCC MYA-4681 / CBS 112371) (Trichophyton mentagrophytes).